Here is a 701-residue protein sequence, read N- to C-terminus: CRS2-associated factor 1, chloroplastic (701 aa).

The transit peptide at 1–37 (MSLKLNTPFPIFAPSLFPNHNPRAPSEIRFSRWGNAN) directs the protein to the chloroplast. Disordered regions lie at residues 68-136 (VHTH…PEVK) and 191-221 (LPQS…QKPG). 2 consecutive CRM domains span residues 241 to 337 (EPLT…TRPR) and 359 to 455 (EGLT…LTTP). The disordered stretch occupies residues 471 to 532 (LPEDDEPSVS…SLQSWSTKDV (62 aa)). Composition is skewed to polar residues over residues 479 to 492 (VSPN…QNPP) and 520 to 530 (TINSLQSWSTK). Residues 564–586 (RVLILMKQAVESGTALVLDAADL) are CRS2 binding.

Interacts with CRS2 and RNA. Part of large ribonucleo-protein complexes that include group IIB introns, CRS2 and CAF1.

Its subcellular location is the plastid. It is found in the chloroplast stroma. Functionally, required for the splicing of group IIB introns in chloroplasts. Forms splicing particles with CRS2. Interacts with RNA and confers intron specificity of the splicing particles. In Arabidopsis thaliana (Mouse-ear cress), this protein is CRS2-associated factor 1, chloroplastic.